We begin with the raw amino-acid sequence, 87 residues long: Small ribosomal subunit protein uS17 (87 aa).

Belongs to the universal ribosomal protein uS17 family. As to quaternary structure, part of the 30S ribosomal subunit.

Functionally, one of the primary rRNA binding proteins, it binds specifically to the 5'-end of 16S ribosomal RNA. The protein is Small ribosomal subunit protein uS17 of Geobacillus kaustophilus (strain HTA426).